Consider the following 751-residue polypeptide: SKI family transcriptional corepressor 1 homolog-B (751 aa).

Disordered regions lie at residues 1 to 30 (MESI…SGPP), 234 to 267 (SRKR…PHKT), 386 to 434 (LDVS…GIPP), 459 to 569 (YGNR…HGNK), and 600 to 635 (QRET…SEER). Polar residues-rich tracts occupy residues 14-27 (SSCS…QSYS) and 244-259 (SESS…TQGE). Basic and acidic residues predominate over residues 416–428 (RNEEDKSGDESRS). Residues 479–491 (SESSSYRSVSPDV) show a composition bias toward low complexity. A compositionally biased stretch (polar residues) spans 539–558 (QENTQMHTLNDLHSTNSSET). Basic and acidic residues-rich tracts occupy residues 559 to 569 (RPSDMESHGNK), 603 to 612 (TSVKDVHEEE), and 620 to 635 (MEPK…SEER). A coiled-coil region spans residues 666 to 704 (SMAKEELQKQLVEQVELRKKLEREFQNLKDSFQDQMKRE).

This sequence belongs to the SKI family.

It localises to the nucleus. Functionally, may inhibit BMP signaling. The polypeptide is SKI family transcriptional corepressor 1 homolog-B (skor1b) (Danio rerio (Zebrafish)).